Reading from the N-terminus, the 362-residue chain is Hepatic sodium/bile acid cotransporter (362 aa).

Over 1–22 the chain is Extracellular; that stretch reads MEVHNVSAPFNFSLPPGFGHRA. N-linked (GlcNAc...) asparagine glycans are attached at residues Asn-5 and Asn-11. Residues 23-44 form a helical membrane-spanning segment; sequence TDKALSIILVLMLLLIMLSLGC. The Cytoplasmic segment spans residues 45-47; that stretch reads TME. A helical membrane pass occupies residues 48–83; sequence FSKIKAHLWKPKGVIVALVAQFGIMPLAAFLLGKIF. The Extracellular segment spans residues 84–86; it reads HLS. A discontinuously helical transmembrane segment spans residues 87–112; that stretch reads NIEALAILICGCSPGGNLSNLFTLAM. Topologically, residues 113-115 are cytoplasmic; that stretch reads KGD. A helical transmembrane segment spans residues 116 to 142; the sequence is MNLSIVMTTCSSFSALGMMPLLLYVYS. The Extracellular portion of the chain corresponds to 143 to 156; that stretch reads KGIYDGDLKDKVPY. Residues 157-179 form a helical membrane-spanning segment; it reads KGIMISLVIVLIPCTIGIVLKSK. Over 180–183 the chain is Cytoplasmic; it reads RPHY. A helical membrane pass occupies residues 184–217; it reads VPYILKGGMIITFLLSVAVTALSVINVGNSIMFV. Residues 218–219 lie on the Extracellular side of the membrane; the sequence is MT. Residues 220-243 form a helical membrane-spanning segment; that stretch reads PHLLATSSLMPFSGFLMGYILSAL. At 244–247 the chain is on the cytoplasmic side; sequence FQLN. The discontinuously helical transmembrane segment at 248 to 273 threads the bilayer; the sequence is PSCRRTISMETGFQNIQLCSTILNVT. Residues 274 to 280 are Extracellular-facing; it reads FPPEVIG. The helical transmembrane segment at 281–311 threads the bilayer; it reads PLFFFPLLYMIFQLAEGLLIIIIFRCYEKIK. Over 312 to 362 the chain is Cytoplasmic; the sequence is PPKDQTKITYKAAATEDATPAALEKGTHNGNIPPLQPGPSPNGLNSGQMAN. Thr-330 carries the post-translational modification Phosphothreonine. The tract at residues 333–362 is disordered; sequence ALEKGTHNGNIPPLQPGPSPNGLNSGQMAN. Polar residues predominate over residues 353-362; that stretch reads NGLNSGQMAN.

The protein belongs to the bile acid:sodium symporter (BASS) (TC 2.A.28) family. In terms of tissue distribution, highly expressed in liver and low expression in kidney.

The protein localises to the cell membrane. It catalyses the reaction taurocholate(out) + 2 Na(+)(out) = taurocholate(in) + 2 Na(+)(in). The enzyme catalyses taurochenodeoxycholate(out) + 2 Na(+)(out) = taurochenodeoxycholate(in) + 2 Na(+)(in). The catalysed reaction is tauroursodeoxycholate(out) + 2 Na(+)(out) = tauroursodeoxycholate(in) + 2 Na(+)(in). It carries out the reaction glycocholate(out) + 2 Na(+)(out) = glycocholate(in) + 2 Na(+)(in). It catalyses the reaction estrone 3-sulfate(out) + 2 Na(+)(out) = estrone 3-sulfate(in) + 2 Na(+)(in). The enzyme catalyses cholate(out) + 2 Na(+)(out) = cholate(in) + 2 Na(+)(in). The catalysed reaction is tauronorcholate(out) + 2 Na(+)(out) = tauronorcholate(in) + 2 Na(+)(in). It carries out the reaction taurodeoxycholate(out) + 2 Na(+)(out) = taurodeoxycholate(in) + 2 Na(+)(in). It catalyses the reaction tauroallocholate(out) + 2 Na(+)(out) = tauroallocholate(in) + 2 Na(+)(in). The enzyme catalyses taurohyodeoxycholate(out) + 2 Na(+)(out) = taurohyodeoxycholate(in) + 2 Na(+)(in). The catalysed reaction is taurohyocholate(out) + 2 Na(+)(out) = taurohyocholate(in) + 2 Na(+)(in). It carries out the reaction tauro-beta-muricholate(out) + 2 Na(+)(out) = tauro-beta-muricholate(in) + 2 Na(+)(in). With respect to regulation, the transport of bile acids is sodium-dependent. In terms of biological role, as a major transporter of conjugated bile salts from plasma into the hepatocyte, it plays a key role in the enterohepatic circulation of bile salts necessary for the solubilization and absorption of dietary fat and fat-soluble vitamins. It is strictly dependent on the extracellular presence of sodium. It exhibits broad substrate specificity and transports various bile acids, such as taurocholate, cholate, as well as non-bile acid organic compounds, such as estrone sulfate. Works collaboratively with the ileal transporter (NTCP2), the organic solute transporter (OST), and the bile salt export pump (BSEP), to ensure efficacious biological recycling of bile acids during enterohepatic circulation. The chain is Hepatic sodium/bile acid cotransporter (Slc10a1) from Rattus norvegicus (Rat).